A 316-amino-acid chain; its full sequence is Membrane protein UL148 (316 aa).

Positions 1–20 (MLRLLFTLVLLALYGPSVDA) are cleaved as a signal peptide. Residues 286–308 (FIVQYLNTLLITMMAAIWARVLI) form a helical membrane-spanning segment.

In terms of assembly, interacts with host SEL1L.

It localises to the host endoplasmic reticulum membrane. In terms of biological role, chaperone protein that plays an important role in HCMV tropism. Cooperates with UL116 to regulate the abundance of gH-gL complexes in virion. Favors the incorporation of gL into virions once UL116 has regulated the early folding steps of virion assembly. Interacts with the host ERAD machinery and slows gO decay which would otherwise be constitutively degraded. Reorganizes the host endoplasmic reticulum and activates the unfolded protein response. Additionally, plays a role in the evasion of antiviral immune response by down-regulating cell surface expression of host CD58. Mechanistically, interacts with host CD58 and retains its immature form intracellularly. The capacity to cause endoplasmic reticulum reorganization and the intracellular retention of host CD58 are functionally independent properties. The chain is Membrane protein UL148 (UL148) from Human cytomegalovirus (strain Merlin) (HHV-5).